The chain runs to 237 residues: ATP synthase subunit a (237 aa).

6 consecutive transmembrane segments (helical) span residues 18–38, 77–97, 103–123, 132–152, 185–205, and 209–229; these read STLW…VGTL, IFTL…PMAF, IAVT…LGFM, LFWV…IEVI, LILF…AIVA, and LEIL…CVYL.

The protein belongs to the ATPase A chain family. As to quaternary structure, F-type ATPases have 2 components, CF(1) - the catalytic core - and CF(0) - the membrane proton channel. CF(1) has five subunits: alpha(3), beta(3), gamma(1), delta(1), epsilon(1). CF(0) has three main subunits: a(1), b(2) and c(9-12). The alpha and beta chains form an alternating ring which encloses part of the gamma chain. CF(1) is attached to CF(0) by a central stalk formed by the gamma and epsilon chains, while a peripheral stalk is formed by the delta and b chains.

Its subcellular location is the cellular chromatophore membrane. Its function is as follows. Key component of the proton channel; it plays a direct role in the translocation of protons across the membrane. The protein is ATP synthase subunit a of Rhodobacter capsulatus (Rhodopseudomonas capsulata).